The primary structure comprises 300 residues: Ribosomal protein L11 methyltransferase (300 aa).

Residues threonine 152, glycine 173, aspartate 195, and asparagine 234 each coordinate S-adenosyl-L-methionine.

The protein belongs to the methyltransferase superfamily. PrmA family.

The protein resides in the cytoplasm. It catalyses the reaction L-lysyl-[protein] + 3 S-adenosyl-L-methionine = N(6),N(6),N(6)-trimethyl-L-lysyl-[protein] + 3 S-adenosyl-L-homocysteine + 3 H(+). Methylates ribosomal protein L11. The sequence is that of Ribosomal protein L11 methyltransferase from Burkholderia ambifaria (strain ATCC BAA-244 / DSM 16087 / CCUG 44356 / LMG 19182 / AMMD) (Burkholderia cepacia (strain AMMD)).